A 146-amino-acid chain; its full sequence is Hemoglobin subunit beta (146 aa).

Positions 2–146 (QWSAEEKQLI…VAHALARKYH (145 aa)) constitute a Globin domain. His-63 and His-92 together coordinate heme b.

It belongs to the globin family. As to quaternary structure, heterotetramer of two alpha chains and two beta chains. As to expression, red blood cells.

Involved in oxygen transport from the lung to the various peripheral tissues. The protein is Hemoglobin subunit beta (HBB) of Struthio camelus (Common ostrich).